Consider the following 123-residue polypeptide: MIRGIGTDIVEIERIKKAIKSNPNFINRFFTQKEIEYFKLRKFNANTISGNFAAKEAVSKALGSGFRGFGLKDIEVLRDELGKPIVNLSDKLYKMFNLDNYNIFISISHSNTDAIAYAIIEVI.

Asp-8 and Glu-56 together coordinate Mg(2+).

The protein belongs to the P-Pant transferase superfamily. AcpS family. Requires Mg(2+) as cofactor.

The protein resides in the cytoplasm. The enzyme catalyses apo-[ACP] + CoA = holo-[ACP] + adenosine 3',5'-bisphosphate + H(+). Transfers the 4'-phosphopantetheine moiety from coenzyme A to a Ser of acyl-carrier-protein. This is Holo-[acyl-carrier-protein] synthase from Clostridium botulinum (strain Eklund 17B / Type B).